Reading from the N-terminus, the 552-residue chain is Urocanate hydratase (552 aa).

Residues 49–50, Gln-127, 173–175, Asp-193, 239–240, 260–264, 270–271, and Tyr-319 contribute to the NAD(+) site; these read GG, GMG, NA, QTSAH, and YI. Cys-407 is an active-site residue. Gly-489 is an NAD(+) binding site.

It belongs to the urocanase family. It depends on NAD(+) as a cofactor.

The protein localises to the cytoplasm. It catalyses the reaction 4-imidazolone-5-propanoate = trans-urocanate + H2O. Its pathway is amino-acid degradation; L-histidine degradation into L-glutamate; N-formimidoyl-L-glutamate from L-histidine: step 2/3. Functionally, catalyzes the conversion of urocanate to 4-imidazolone-5-propionate. The chain is Urocanate hydratase from Bacillus cereus (strain AH820).